The following is a 118-amino-acid chain: MARIAGINIPDQKHTVIALTAIYGIGKTRAKAICAVTGIAEDVKIRELSEEQIEKLREEVGKFTVEGDLRREVTLSIKRLLDLGCYRGLRHRRSLPVRGQRTKTNARTRKGPRKPIKK.

Residues 94–118 are disordered; that stretch reads SLPVRGQRTKTNARTRKGPRKPIKK.

This sequence belongs to the universal ribosomal protein uS13 family. As to quaternary structure, part of the 30S ribosomal subunit. Forms a loose heterodimer with protein S19. Forms two bridges to the 50S subunit in the 70S ribosome.

Functionally, located at the top of the head of the 30S subunit, it contacts several helices of the 16S rRNA. In the 70S ribosome it contacts the 23S rRNA (bridge B1a) and protein L5 of the 50S subunit (bridge B1b), connecting the 2 subunits; these bridges are implicated in subunit movement. Contacts the tRNAs in the A and P-sites. The protein is Small ribosomal subunit protein uS13 of Actinobacillus pleuropneumoniae serotype 5b (strain L20).